The following is a 245-amino-acid chain: Uridylate kinase (245 aa).

ATP is bound at residue 13-16; it reads KLSG. G56 contacts UMP. Residues G57 and R61 each contribute to the ATP site. Residues D76 and 138 to 145 contribute to the UMP site; that span reads TGRPFFTT. ATP contacts are provided by N166, Y172, and D175.

The protein belongs to the UMP kinase family. Homohexamer.

The protein localises to the cytoplasm. The enzyme catalyses UMP + ATP = UDP + ADP. Its pathway is pyrimidine metabolism; CTP biosynthesis via de novo pathway; UDP from UMP (UMPK route): step 1/1. Inhibited by UTP. In terms of biological role, catalyzes the reversible phosphorylation of UMP to UDP. The sequence is that of Uridylate kinase from Mycoplasma mobile (strain ATCC 43663 / 163K / NCTC 11711) (Mesomycoplasma mobile).